Consider the following 523-residue polypeptide: Glycerate kinase (523 aa).

Ser-60 carries the phosphoserine modification. Position 200 is an N6-acetyllysine (Lys-200).

The protein belongs to the glycerate kinase type-2 family.

Its subcellular location is the cytoplasm. The enzyme catalyses (R)-glycerate + ATP = (2R)-3-phosphoglycerate + ADP + H(+). This Rattus norvegicus (Rat) protein is Glycerate kinase (Glyctk).